The sequence spans 482 residues: Glycogen synthase (482 aa).

Lysine 21 lines the ADP-alpha-D-glucose pocket.

It belongs to the glycosyltransferase 1 family. Bacterial/plant glycogen synthase subfamily.

It catalyses the reaction [(1-&gt;4)-alpha-D-glucosyl](n) + ADP-alpha-D-glucose = [(1-&gt;4)-alpha-D-glucosyl](n+1) + ADP + H(+). It participates in glycan biosynthesis; glycogen biosynthesis. Functionally, synthesizes alpha-1,4-glucan chains using ADP-glucose. The chain is Glycogen synthase from Clostridium perfringens (strain 13 / Type A).